The following is a 341-amino-acid chain: Tetraacyldisaccharide 4'-kinase (341 aa).

Residue 54 to 61 coordinates ATP; the sequence is TVGGAGKT.

It belongs to the LpxK family.

The enzyme catalyses a lipid A disaccharide + ATP = a lipid IVA + ADP + H(+). It functions in the pathway glycolipid biosynthesis; lipid IV(A) biosynthesis; lipid IV(A) from (3R)-3-hydroxytetradecanoyl-[acyl-carrier-protein] and UDP-N-acetyl-alpha-D-glucosamine: step 6/6. Its function is as follows. Transfers the gamma-phosphate of ATP to the 4'-position of a tetraacyldisaccharide 1-phosphate intermediate (termed DS-1-P) to form tetraacyldisaccharide 1,4'-bis-phosphate (lipid IVA). In Brucella ovis (strain ATCC 25840 / 63/290 / NCTC 10512), this protein is Tetraacyldisaccharide 4'-kinase.